A 261-amino-acid chain; its full sequence is MSYTPGVGGDPAQLAQRISSNIQKITQCSAEIQRTLNQLGTPQDSPELRQQLQQKQQYTNQLTKETDKYIKEFGSLPTTPSEQRQRKIQKDRLVGEFTTSLTNFQKVQRQAAEREKEFVARVRASSRVSGSFPEDSSKERNLVSWESQTQPQVQVQDEEITEDDLRLIHERESSIRQLEADIMDINEIFKDLGMMIHEQGDVIDSIEANVENAEVHVQQANQQLSRAADYQRKSRKTLCIIILILVIGVVIIGLIIWGLNR.

The residue at position 2 (Ser-2) is an N-acetylserine. Residues 2–238 (SYTPGVGGDP…DYQRKSRKTL (237 aa)) lie on the Cytoplasmic side of the membrane. At Thr-4 the chain carries Phosphothreonine. Residue Ser-45 is modified to Phosphoserine. Positions 47-69 (ELRQQLQQKQQYTNQLTKETDKY) form a coiled coil. At Ser-75 the chain carries Phosphoserine. Thr-79 carries the post-translational modification Phosphothreonine. Ser-125, Ser-126, Ser-129, and Ser-205 each carry phosphoserine. The tract at residues 129 to 148 (SGSFPEDSSKERNLVSWESQ) is disordered. A t-SNARE coiled-coil homology domain is found at 165–227 (LRLIHERESS…QQANQQLSRA (63 aa)). The helical; Anchor for type IV membrane protein transmembrane segment at 239-259 (CIIILILVIGVVIIGLIIWGL) threads the bilayer. Residues 260–261 (NR) lie on the Vesicular side of the membrane.

This sequence belongs to the syntaxin family. As to quaternary structure, forms a SNARE complex with VTI1B, STX8 and VAMP8 which functions in the homotypic fusion of late endosomes. Component of the SNARE complex composed of STX7, STX8, VAMP7 and VTI1B that is required for heterotypic fusion of late endosomes with lysosomes. Interacts with VPS11, VPS16 and VPS18. Interacts with VPS33A. Interacts with TPC1.

Its subcellular location is the early endosome membrane. Functionally, may be involved in protein trafficking from the plasma membrane to the early endosome (EE) as well as in homotypic fusion of endocytic organelles. Mediates the endocytic trafficking from early endosomes to late endosomes and lysosomes. This chain is Syntaxin-7 (STX7), found in Pongo abelii (Sumatran orangutan).